A 212-amino-acid polypeptide reads, in one-letter code: 3,4-dihydroxy-2-butanone 4-phosphate synthase (212 aa).

Residues 37-38 (RE), Asp42, 150-154 (RRGHT), and Glu174 contribute to the D-ribulose 5-phosphate site. Glu38 provides a ligand contact to Mg(2+). A Mg(2+)-binding site is contributed by His153.

Belongs to the DHBP synthase family. As to quaternary structure, homodimer. Requires Mg(2+) as cofactor. Mn(2+) serves as cofactor.

It carries out the reaction D-ribulose 5-phosphate = (2S)-2-hydroxy-3-oxobutyl phosphate + formate + H(+). It functions in the pathway cofactor biosynthesis; riboflavin biosynthesis; 2-hydroxy-3-oxobutyl phosphate from D-ribulose 5-phosphate: step 1/1. Its function is as follows. Catalyzes the conversion of D-ribulose 5-phosphate to formate and 3,4-dihydroxy-2-butanone 4-phosphate. The chain is 3,4-dihydroxy-2-butanone 4-phosphate synthase from Shewanella halifaxensis (strain HAW-EB4).